The sequence spans 429 residues: Serine hydroxymethyltransferase 1 (429 aa).

Residues Leu125 and 129–131 each bind (6S)-5,6,7,8-tetrahydrofolate; that span reads GHL. An N6-(pyridoxal phosphate)lysine modification is found at Lys234.

The protein belongs to the SHMT family. As to quaternary structure, homodimer. Requires pyridoxal 5'-phosphate as cofactor.

The protein resides in the cytoplasm. The catalysed reaction is (6R)-5,10-methylene-5,6,7,8-tetrahydrofolate + glycine + H2O = (6S)-5,6,7,8-tetrahydrofolate + L-serine. Its pathway is one-carbon metabolism; tetrahydrofolate interconversion. The protein operates within amino-acid biosynthesis; glycine biosynthesis; glycine from L-serine: step 1/1. Its function is as follows. Catalyzes the reversible interconversion of serine and glycine with tetrahydrofolate (THF) serving as the one-carbon carrier. This reaction serves as the major source of one-carbon groups required for the biosynthesis of purines, thymidylate, methionine, and other important biomolecules. Also exhibits THF-independent aldolase activity toward beta-hydroxyamino acids, producing glycine and aldehydes, via a retro-aldol mechanism. The polypeptide is Serine hydroxymethyltransferase 1 (Agrobacterium fabrum (strain C58 / ATCC 33970) (Agrobacterium tumefaciens (strain C58))).